The following is a 93-amino-acid chain: Translation initiation factor IF-1 (93 aa).

An S1-like domain is found at 1–72 (MAKEELIQFE…EKGRLIFRHK (72 aa)). The interval 70–93 (RHKDERPGGGPPRGAPPRGQFRRR) is disordered.

Belongs to the IF-1 family. In terms of assembly, component of the 30S ribosomal translation pre-initiation complex which assembles on the 30S ribosome in the order IF-2 and IF-3, IF-1 and N-formylmethionyl-tRNA(fMet); mRNA recruitment can occur at any time during PIC assembly.

It localises to the cytoplasm. One of the essential components for the initiation of protein synthesis. Stabilizes the binding of IF-2 and IF-3 on the 30S subunit to which N-formylmethionyl-tRNA(fMet) subsequently binds. Helps modulate mRNA selection, yielding the 30S pre-initiation complex (PIC). Upon addition of the 50S ribosomal subunit IF-1, IF-2 and IF-3 are released leaving the mature 70S translation initiation complex. This Rhodopseudomonas palustris (strain BisB18) protein is Translation initiation factor IF-1.